The sequence spans 569 residues: Isochorismate synthase 1, chloroplastic (569 aa).

A chloroplast-targeting transit peptide spans 1–45 (MASLQFSSQFLGSNTKTHSSIISISRSYSPTPFTRFSRKKYESCS).

This sequence belongs to the isochorismate synthase family. As to quaternary structure, monomer. Mg(2+) serves as cofactor. As to expression, leaves.

It is found in the plastid. The protein localises to the chloroplast. The catalysed reaction is chorismate = isochorismate. It functions in the pathway siderophore biosynthesis; salicylate biosynthesis. In terms of biological role, isochorismate synthase involved in the synthesis of salicylic acid (SA) required for both local and systemic acquired resistance (LAR and SAR) while SA synthesized through the phenylalanine ammonium lyase (PAL) pathway seems to potentiate plant cell death. Also involved in phylloquinone (vitamin K1) synthesis. Has no isochorismate pyruvate lyase (IPL) activity. This Arabidopsis thaliana (Mouse-ear cress) protein is Isochorismate synthase 1, chloroplastic (ICS1).